The following is a 387-amino-acid chain: MDSIQESDVLNAVKTKLPPCCLRIFRNKIILVGTYDLDKSTGYRSGSLDVFTMDLKLLCSNNTYGAILDLKLSPFDDTLICTAHSTGNIMLWRIRCTDKDDFQSNELDIHAIANLQLFEKDVLIASCHFSPLDCKKLLVTNTAGEAATIDIRTLSVQFTASAIAQAYSKLDKIDYEVQGATEKVIHVESGQFLKPHELECWTAEFGSLQPFQDVVFTGGDDSRIMAHDLRSKEFIWSNNRIHDAGVVSIKCSQPNFRNNKPTSIITGSYDDNIRSLDLRMMGESIFPGANVPTVNKLACDLGGGVWRFVESPIDQEQSHHNGSDRLLVCCMYNGAKVVTMNDNSDEYFQIQHYLKKGHDSMCYGGDWSNSLIATCSFYDNSLQTWIV.

WD repeat units lie at residues Asn-62–Phe-102, Glu-119–Thr-159, Pro-195–Ser-237, Ile-241–Phe-286, and Gly-357–Val-387.

The protein belongs to the DPH7 family. As to quaternary structure, interacts with CAN1 and RTT10.

It is found in the cytoplasm. Its subcellular location is the endosome. It catalyses the reaction diphthine methyl ester-[translation elongation factor 2] + H2O = diphthine-[translation elongation factor 2] + methanol + H(+). It participates in protein modification; peptidyl-diphthamide biosynthesis. Catalyzes the demethylation of diphthine methyl ester to form diphthine, an intermediate in diphthamide biosynthesis, a post-translational modification of histidine which occurs in translation elongation factor 2 (EFT1 and EFT2). Also plays a role in the regulation of the retromer complex and is required for the recycling from endosomes of plasma membrane proteins like CAN1 and MUP1. Identified in a screen for mutants with decreased levels of rDNA transcription. This is Diphthine methyltransferase (RRT2) from Saccharomyces cerevisiae (strain ATCC 204508 / S288c) (Baker's yeast).